The primary structure comprises 738 residues: Ent-kaurene synthase-like 1 (738 aa).

D487, D491, N631, D632, and E639 together coordinate Mg(2+). The DDXXD motif signature appears at 487–491 (DDFFD).

Belongs to the terpene synthase family. It depends on Mg(2+) as a cofactor.

It carries out the reaction ent-copalyl diphosphate = ent-kaur-16-ene + diphosphate. It participates in secondary metabolite biosynthesis; terpenoid biosynthesis. Its function is as follows. Diterpene cyclase involved in the biosynthesis of labdane-related diterpenoids (LRDs) natural products. Catalyzes the cyclization of ent-CDP into ent-kaurene. This chain is Ent-kaurene synthase-like 1, found in Ricinus communis (Castor bean).